Reading from the N-terminus, the 492-residue chain is Glutamyl-tRNA(Gln) amidotransferase subunit A (492 aa).

Catalysis depends on charge relay system residues Lys-78 and Ser-158. Ser-182 serves as the catalytic Acyl-ester intermediate.

This sequence belongs to the amidase family. GatA subfamily. Heterotrimer of A, B and C subunits.

The catalysed reaction is L-glutamyl-tRNA(Gln) + L-glutamine + ATP + H2O = L-glutaminyl-tRNA(Gln) + L-glutamate + ADP + phosphate + H(+). Its function is as follows. Allows the formation of correctly charged Gln-tRNA(Gln) through the transamidation of misacylated Glu-tRNA(Gln) in organisms which lack glutaminyl-tRNA synthetase. The reaction takes place in the presence of glutamine and ATP through an activated gamma-phospho-Glu-tRNA(Gln). In Rhodopseudomonas palustris (strain BisB18), this protein is Glutamyl-tRNA(Gln) amidotransferase subunit A.